A 179-amino-acid chain; its full sequence is Ribosome maturation factor RimM (179 aa).

The PRC barrel domain maps to 95–174 (KDEFFYFDIL…QIFCTQDAFL (80 aa)).

It belongs to the RimM family. In terms of assembly, binds ribosomal protein uS19.

The protein resides in the cytoplasm. Functionally, an accessory protein needed during the final step in the assembly of 30S ribosomal subunit, possibly for assembly of the head region. Essential for efficient processing of 16S rRNA. May be needed both before and after RbfA during the maturation of 16S rRNA. It has affinity for free ribosomal 30S subunits but not for 70S ribosomes. This Campylobacter jejuni subsp. jejuni serotype O:2 (strain ATCC 700819 / NCTC 11168) protein is Ribosome maturation factor RimM.